Reading from the N-terminus, the 101-residue chain is Vacuolar ATPase assembly integral membrane protein VMA21 (101 aa).

The Cytoplasmic portion of the chain corresponds to 1–25; the sequence is MERLDKAALNALQPSDFRNESSLAS. A helical membrane pass occupies residues 26–46; that stretch reads TLKTLLFFTALMITVPIGLYF. Residues 47 to 65 are Lumenal-facing; the sequence is TTKSYVFEGAFGMSNRDSY. Residues 66–86 traverse the membrane as a helical segment; the sequence is FYAAIVAVVAVHVVLALFVYV. Residues 87-101 are Cytoplasmic-facing; it reads AWNEGSRQWREGKQD.

It belongs to the VMA21 family. In terms of assembly, associates with the V0 complex of the vacuolar ATPase (V-ATPase). Interacts with ATP6AP2.

The protein resides in the endoplasmic reticulum membrane. It is found in the endoplasmic reticulum-Golgi intermediate compartment membrane. It localises to the cytoplasmic vesicle. The protein localises to the COPII-coated vesicle membrane. Functionally, required for the assembly of the V0 complex of the vacuolar ATPase (V-ATPase) in the endoplasmic reticulum. This chain is Vacuolar ATPase assembly integral membrane protein VMA21, found in Bos taurus (Bovine).